Reading from the N-terminus, the 465-residue chain is Lactaldehyde dehydrogenase (465 aa).

Residue 220–225 participates in NAD(+) binding; sequence GSVEIG. Catalysis depends on residues Glu240 and Cys274.

The protein belongs to the aldehyde dehydrogenase family. As to quaternary structure, homotetramer.

It catalyses the reaction (S)-lactaldehyde + NAD(+) + H2O = (S)-lactate + NADH + 2 H(+). It participates in cofactor biosynthesis; coenzyme F420 biosynthesis. In terms of biological role, involved in F420 biosynthesis through the oxidation of lactaldehyde to lactate. The protein is Lactaldehyde dehydrogenase of Methanococcus maripaludis (strain C7 / ATCC BAA-1331).